Here is a 157-residue protein sequence, read N- to C-terminus: SsrA-binding protein (157 aa).

A disordered region spans residues 133-157 (LHDKRETEKKRDWSREKSRLLRARG). Residues 135 to 151 (DKRETEKKRDWSREKSR) are compositionally biased toward basic and acidic residues.

The protein belongs to the SmpB family.

Its subcellular location is the cytoplasm. Required for rescue of stalled ribosomes mediated by trans-translation. Binds to transfer-messenger RNA (tmRNA), required for stable association of tmRNA with ribosomes. tmRNA and SmpB together mimic tRNA shape, replacing the anticodon stem-loop with SmpB. tmRNA is encoded by the ssrA gene; the 2 termini fold to resemble tRNA(Ala) and it encodes a 'tag peptide', a short internal open reading frame. During trans-translation Ala-aminoacylated tmRNA acts like a tRNA, entering the A-site of stalled ribosomes, displacing the stalled mRNA. The ribosome then switches to translate the ORF on the tmRNA; the nascent peptide is terminated with the 'tag peptide' encoded by the tmRNA and targeted for degradation. The ribosome is freed to recommence translation, which seems to be the essential function of trans-translation. The polypeptide is SsrA-binding protein (Afipia carboxidovorans (strain ATCC 49405 / DSM 1227 / KCTC 32145 / OM5) (Oligotropha carboxidovorans)).